A 161-amino-acid chain; its full sequence is uncharacterized protein (161 aa).

Disordered stretches follow at residues 1–67 (MNSN…IQNF) and 80–147 (DSHQ…KKKQ). Residues 84-126 (NFNDNGFNNNNNNNNSNMNHNFSNQNNYNNNNNNNNNNNSNFN) show a composition bias toward low complexity. A compositionally biased stretch (polar residues) spans 135 to 147 (GTSSQVGNNKKKQ).

This is an uncharacterized protein from Dictyostelium discoideum (Social amoeba).